The sequence spans 348 residues: Tetraacyldisaccharide 4'-kinase (348 aa).

Position 54–61 (54–61) interacts with ATP; the sequence is TVGGAGKT.

Belongs to the LpxK family.

The catalysed reaction is a lipid A disaccharide + ATP = a lipid IVA + ADP + H(+). It functions in the pathway glycolipid biosynthesis; lipid IV(A) biosynthesis; lipid IV(A) from (3R)-3-hydroxytetradecanoyl-[acyl-carrier-protein] and UDP-N-acetyl-alpha-D-glucosamine: step 6/6. Functionally, transfers the gamma-phosphate of ATP to the 4'-position of a tetraacyldisaccharide 1-phosphate intermediate (termed DS-1-P) to form tetraacyldisaccharide 1,4'-bis-phosphate (lipid IVA). This Agrobacterium fabrum (strain C58 / ATCC 33970) (Agrobacterium tumefaciens (strain C58)) protein is Tetraacyldisaccharide 4'-kinase.